The primary structure comprises 86 residues: MAETHSLGTKILIKIIRLYQIMISPFIGARCRFVPTCSCYGIEALKTHGLLKGGWLTLKRVLKCHPLNAGGFDPVPPKTNNNDEKK.

The protein belongs to the UPF0161 family.

The protein resides in the cell inner membrane. Could be involved in insertion of integral membrane proteins into the membrane. The protein is Putative membrane protein insertion efficiency factor of Haemophilus influenzae (strain 86-028NP).